Reading from the N-terminus, the 212-residue chain is uncharacterized protein (212 aa).

S-adenosyl-L-methionine is bound by residues Gly-53, Glu-74, and Asp-97.

Belongs to the methyltransferase superfamily. YrrT family.

Its function is as follows. Could be a S-adenosyl-L-methionine-dependent methyltransferase. This is an uncharacterized protein from Bacillus cereus (strain ATCC 14579 / DSM 31 / CCUG 7414 / JCM 2152 / NBRC 15305 / NCIMB 9373 / NCTC 2599 / NRRL B-3711).